We begin with the raw amino-acid sequence, 280 residues long: Shikimate dehydrogenase (NADP(+)) (280 aa).

Shikimate-binding positions include 15-17 (SLS) and Thr62. Lys66 acts as the Proton acceptor in catalysis. Shikimate is bound by residues Asn88 and Asp104. NADP(+)-binding positions include 128–132 (GAGGA), 151–156 (NRTEER), and Ile222. Residue Tyr224 participates in shikimate binding. Gly245 contacts NADP(+).

Belongs to the shikimate dehydrogenase family. Homodimer.

The catalysed reaction is shikimate + NADP(+) = 3-dehydroshikimate + NADPH + H(+). It functions in the pathway metabolic intermediate biosynthesis; chorismate biosynthesis; chorismate from D-erythrose 4-phosphate and phosphoenolpyruvate: step 4/7. Its function is as follows. Involved in the biosynthesis of the chorismate, which leads to the biosynthesis of aromatic amino acids. Catalyzes the reversible NADPH linked reduction of 3-dehydroshikimate (DHSA) to yield shikimate (SA). In Methanosarcina acetivorans (strain ATCC 35395 / DSM 2834 / JCM 12185 / C2A), this protein is Shikimate dehydrogenase (NADP(+)).